The sequence spans 577 residues: Double-stranded RNA-binding protein Staufen homolog 1 (577 aa).

At S2 the chain carries N-acetylserine. Positions 34–44 (SIPSTTSSLPS) are enriched in polar residues. A disordered region spans residues 34-55 (SIPSTTSSLPSENAGRPIQNSA). Residues 72 to 162 (TPTVELNALC…AAKALRILQN (91 aa)) enclose the DRBM 1 domain. At R108 the chain carries Asymmetric dimethylarginine. Asymmetric dimethylarginine; alternate is present on R115. An Omega-N-methylarginine; alternate modification is found at R115. S176 is subject to Phosphoserine. Residues 184–251 (SEISQVFEIA…AIAVLEELKK (68 aa)) enclose the DRBM 2 domain. Position 278 is a phosphoserine (S278). The DRBM 3 domain maps to 286 to 354 (NPISRLAQIQ…AENMLEILGF (69 aa)). Residues 360-397 (QPTKPALKSEEKTPIKKPGDGRKVTFFEPGSGDENGTS) are disordered. Residues 366–384 (LKSEEKTPIKKPGDGRKVT) show a composition bias toward basic and acidic residues. The residue at position 390 (S390) is a Phosphoserine.

Binds tubulin. Binds with low affinity single-stranded RNA or DNA homopolymers. Interacts with CASC3 in an RNA-dependent manner. Identified in a mRNP complex, at least composed of DHX9, DDX3X, ELAVL1, HNRNPU, IGF2BP1, ILF3, PABPC1, PCBP2, PTBP2, STAU1, STAU2, SYNCRIP and YBX1. In terms of assembly, (Microbial infection) Interacts with HERV-K rec and gag proteins. As to quaternary structure, (Microbial infection) Interacts with HIV-1 GAG polyprotein. (Microbial infection) Interacts with influenza virus NS1 protein. In terms of assembly, (Microbial infection) Interacts with Ebola virus NP, VP30 and VP35. As to expression, widely expressed. Expressed in brain, pancreas, heart, skeletal muscles, liver, lung, kidney and placenta.

It localises to the cytoplasm. The protein localises to the rough endoplasmic reticulum. Binds double-stranded RNA (regardless of the sequence) and tubulin. May play a role in specific positioning of mRNAs at given sites in the cell by cross-linking cytoskeletal and RNA components, and in stimulating their translation at the site. In terms of biological role, (Microbial infection) Plays a role in virus particles production of many viruses including of HIV-1, HERV-K, ebola virus and influenza virus. Acts by interacting with various viral proteins involved in particle budding process. The sequence is that of Double-stranded RNA-binding protein Staufen homolog 1 (STAU1) from Homo sapiens (Human).